The chain runs to 402 residues: Acetate kinase (402 aa).

Asn-7 provides a ligand contact to Mg(2+). Residue Lys-14 participates in ATP binding. Substrate is bound at residue Arg-95. Asp-152 functions as the Proton donor/acceptor in the catalytic mechanism. ATP-binding positions include His-212–Gly-216, Asp-286–Arg-288, and Gly-334–Asn-338. A Mg(2+)-binding site is contributed by Glu-388.

This sequence belongs to the acetokinase family. As to quaternary structure, homodimer. Mg(2+) serves as cofactor. It depends on Mn(2+) as a cofactor.

It is found in the cytoplasm. It carries out the reaction acetate + ATP = acetyl phosphate + ADP. It functions in the pathway metabolic intermediate biosynthesis; acetyl-CoA biosynthesis; acetyl-CoA from acetate: step 1/2. In terms of biological role, catalyzes the formation of acetyl phosphate from acetate and ATP. Can also catalyze the reverse reaction. This chain is Acetate kinase, found in Oleidesulfovibrio alaskensis (strain ATCC BAA-1058 / DSM 17464 / G20) (Desulfovibrio alaskensis).